The chain runs to 313 residues: Protease HtpX homolog (313 aa).

Helical transmembrane passes span 7-24 (AMLLAFMTALFMAVGYLI) and 29-46 (GMMIALVIAAAMNLFSYW). H130 is a Zn(2+) binding site. E131 is a catalytic residue. H134 is a binding site for Zn(2+). 2 helical membrane passes run 145 to 165 (ITATLAGAISMLGNFAFFFGG) and 172 to 192 (PFGFIGILVAMIVAPLAAMVV). A Zn(2+)-binding site is contributed by E201. The interval 282–313 (GNAPPASLREDEPGADGPWGRSASRARKGPWS) is disordered.

It belongs to the peptidase M48B family. The cofactor is Zn(2+).

The protein resides in the cell inner membrane. The sequence is that of Protease HtpX homolog from Chelativorans sp. (strain BNC1).